We begin with the raw amino-acid sequence, 340 residues long: Dihydroorotate dehydrogenase (quinone) (340 aa).

FMN-binding positions include 63–67 (AGLDK) and threonine 87. Residue lysine 67 participates in substrate binding. 112-116 (NRMGF) provides a ligand contact to substrate. The FMN site is built by asparagine 140 and asparagine 173. Substrate is bound at residue asparagine 173. The Nucleophile role is filled by serine 176. Asparagine 178 is a binding site for substrate. Positions 218 and 246 each coordinate FMN. 247–248 (NT) contributes to the substrate binding site. Residues glycine 269, glycine 298, and 319–320 (YT) each bind FMN.

This sequence belongs to the dihydroorotate dehydrogenase family. Type 2 subfamily. Monomer. The cofactor is FMN.

It is found in the cell membrane. It carries out the reaction (S)-dihydroorotate + a quinone = orotate + a quinol. It functions in the pathway pyrimidine metabolism; UMP biosynthesis via de novo pathway; orotate from (S)-dihydroorotate (quinone route): step 1/1. In terms of biological role, catalyzes the conversion of dihydroorotate to orotate with quinone as electron acceptor. In Methylococcus capsulatus (strain ATCC 33009 / NCIMB 11132 / Bath), this protein is Dihydroorotate dehydrogenase (quinone).